A 94-amino-acid chain; its full sequence is Putative testis-specific prion protein (94 aa).

The N-terminal stretch at 1–18 (MQHSLVFFFAVILHLSHL) is a signal peptide. N-linked (GlcNAc...) asparagine glycosylation occurs at asparagine 44.

In terms of tissue distribution, specifically expressed in adult testis.

Its subcellular location is the secreted. The polypeptide is Putative testis-specific prion protein (PRNT) (Homo sapiens (Human)).